Consider the following 271-residue polypeptide: Peroxiredoxin-4 (271 aa).

The N-terminal stretch at 1–37 (MEALPLLAATTPDHGRHRRLLLLPLLLFLLPAGAVQG) is a signal peptide. Positions 79–237 (AKISKPAPYW…TLRLVQAFQY (159 aa)) constitute a Thioredoxin domain. Cysteine 124 (cysteine sulfenic acid (-SOH) intermediate) is an active-site residue.

This sequence belongs to the peroxiredoxin family. AhpC/Prx1 subfamily. Homodimer; disulfide-linked, upon oxidation. 5 homodimers assemble to form a ring-like decamer. Can form heterodimers with PRDX1. The enzyme can be inactivated by further oxidation of the cysteine sulfenic acid (C(P)-SOH) to sulphinic acid (C(P)-SO2H) and sulphonic acid (C(P)-SO3H) instead of its condensation to a disulfide bond.

The protein resides in the cytoplasm. It localises to the endoplasmic reticulum. It catalyses the reaction a hydroperoxide + [thioredoxin]-dithiol = an alcohol + [thioredoxin]-disulfide + H2O. In terms of biological role, thiol-specific peroxidase that catalyzes the reduction of hydrogen peroxide and organic hydroperoxides to water and alcohols, respectively. Plays a role in cell protection against oxidative stress by detoxifying peroxides and as sensor of hydrogen peroxide-mediated signaling events. Regulates the activation of NF-kappa-B in the cytosol by a modulation of I-kappa-B-alpha phosphorylation. The protein is Peroxiredoxin-4 (PRDX4) of Homo sapiens (Human).